The sequence spans 84 residues: M-zodatoxin-Lt2b (84 aa).

An N-terminal signal peptide occupies residues 1-22 (MKYFVIALALAVALVCIAESTA). Residues 23–58 (YEVNEELENELDDLDDAAWLAVAEELQGLEDFEESR) constitute a propeptide that is removed on maturation. The Processing quadruplet motif signature appears at 55-58 (EESR).

Post-translationally, cleavage of the propeptide depends on the processing quadruplet motif (XXXR, with at least one of X being E). As to expression, expressed by the venom gland.

It localises to the secreted. Functionally, has antimicrobial activity against both Gram-positive and Gram-negative bacteria, and yeasts. Also has a strong hemolytic activity against rabbit erythrocytes. Causes paralysis, but is not lethal when injected into insect (M.domestica) larvae. The polypeptide is M-zodatoxin-Lt2b (Lachesana tarabaevi (Spider)).